We begin with the raw amino-acid sequence, 251 residues long: 4-hydroxy-tetrahydrodipicolinate reductase (251 aa).

Residues 8-13, 76-78, and 106-109 each bind NAD(+); these read GAKGRM, GTT, and APNF. The Proton donor/acceptor role is filled by His136. His137 lines the (S)-2,3,4,5-tetrahydrodipicolinate pocket. Lys140 (proton donor) is an active-site residue. 146 to 147 contacts (S)-2,3,4,5-tetrahydrodipicolinate; that stretch reads GT.

This sequence belongs to the DapB family.

The protein resides in the cytoplasm. The catalysed reaction is (S)-2,3,4,5-tetrahydrodipicolinate + NAD(+) + H2O = (2S,4S)-4-hydroxy-2,3,4,5-tetrahydrodipicolinate + NADH + H(+). It carries out the reaction (S)-2,3,4,5-tetrahydrodipicolinate + NADP(+) + H2O = (2S,4S)-4-hydroxy-2,3,4,5-tetrahydrodipicolinate + NADPH + H(+). The protein operates within amino-acid biosynthesis; L-lysine biosynthesis via DAP pathway; (S)-tetrahydrodipicolinate from L-aspartate: step 4/4. Functionally, catalyzes the conversion of 4-hydroxy-tetrahydrodipicolinate (HTPA) to tetrahydrodipicolinate. This chain is 4-hydroxy-tetrahydrodipicolinate reductase, found in Bifidobacterium longum subsp. infantis (strain ATCC 15697 / DSM 20088 / JCM 1222 / NCTC 11817 / S12).